The sequence spans 334 residues: Chitinase 9 (334 aa).

Residues 1-23 (MKATTTAVALLVAAAAMAAQVVA) form the signal peptide. Residues 24 to 64 (EQCGSQAGGALCPNCLCCSSYGWCGSTSDYCGDGCQSQCDG) form the Chitin-binding type-1 domain. Cystine bridges form between Cys26–Cys41, Cys35–Cys47, Cys38–Cys65, Cys40–Cys54, Cys58–Cys62, Cys107–Cys169, Cys181–Cys189, and Cys288–Cys320. Catalysis depends on Glu151, which acts as the Proton donor.

This sequence belongs to the glycosyl hydrolase 19 family. Chitinase class I subfamily. As to expression, expressed at high levels in roots, sheaths and meristems.

The catalysed reaction is Random endo-hydrolysis of N-acetyl-beta-D-glucosaminide (1-&gt;4)-beta-linkages in chitin and chitodextrins.. In terms of biological role, may play a role in defense against fungal pathogens containing chitin. The chain is Chitinase 9 (Cht9) from Oryza sativa subsp. japonica (Rice).